Here is a 351-residue protein sequence, read N- to C-terminus: Photosystem II D2 protein (351 aa).

A helical membrane pass occupies residues 39-59 (TAYLAIGGWLTGTTFVTSWYT). Histidine 116 serves as a coordination point for chlorophyll a. Residues 123–139 (GFMLRQFEIARLVGIRP) form a helical membrane-spanning segment. Residues glutamine 128 and asparagine 141 each coordinate pheophytin a. Residues 151–164 (VFVSVFLMYPLGQS) form a helical membrane-spanning segment. Histidine 196 lines the chlorophyll a pocket. A helical membrane pass occupies residues 206 to 226 (GALLCAIHGATVENTLFEDGE). Positions 213 and 260 each coordinate a plastoquinone. Histidine 213 provides a ligand contact to Fe cation. Histidine 267 is a Fe cation binding site. The chain crosses the membrane as a helical span at residues 277-293 (GLWTSSIGIIGLALNLR).

It belongs to the reaction center PufL/M/PsbA/D family. PSII is composed of 1 copy each of membrane proteins PsbA, PsbB, PsbC, PsbD, PsbE, PsbF, PsbH, PsbI, PsbJ, PsbK, PsbL, PsbM, PsbT, PsbX, PsbY, PsbZ, Psb30/Ycf12, peripheral proteins PsbO, CyanoQ (PsbQ), PsbU, PsbV and a large number of cofactors. It forms dimeric complexes. It depends on The D1/D2 heterodimer binds P680, chlorophylls that are the primary electron donor of PSII, and subsequent electron acceptors. It shares a non-heme iron and each subunit binds pheophytin, quinone, additional chlorophylls, carotenoids and lipids. There is also a Cl(-1) ion associated with D1 and D2, which is required for oxygen evolution. The PSII complex binds additional chlorophylls, carotenoids and specific lipids. as a cofactor.

It is found in the cellular thylakoid membrane. The enzyme catalyses 2 a plastoquinone + 4 hnu + 2 H2O = 2 a plastoquinol + O2. Functionally, photosystem II (PSII) is a light-driven water:plastoquinone oxidoreductase that uses light energy to abstract electrons from H(2)O, generating O(2) and a proton gradient subsequently used for ATP formation. It consists of a core antenna complex that captures photons, and an electron transfer chain that converts photonic excitation into a charge separation. The D1/D2 (PsbA/PsbD) reaction center heterodimer binds P680, the primary electron donor of PSII as well as several subsequent electron acceptors. D2 is needed for assembly of a stable PSII complex. The polypeptide is Photosystem II D2 protein (Synechococcus sp. (strain WH7803)).